The following is a 522-amino-acid chain: Sorting nexin-1 (522 aa).

2 disordered regions span residues 1 to 89 (MASG…QDLF) and 115 to 142 (SLPP…QEDQ). 2 positions are modified to phosphoserine: Ser-32 and Ser-39. Residues 35–45 (EAGDSDTEGED) are compositionally biased toward acidic residues. Residues Thr-41 and Thr-48 each carry the phosphothreonine modification. Residues Ser-58 and Ser-72 each carry the phosphoserine modification. A compositionally biased stretch (polar residues) spans 60–73 (KRTTSLLPINNGSK). The span at 132 to 142 (EELEEEEQEDQ) shows a compositional bias: acidic residues. Residues 143-272 (FDLTVGITDP…EFLEKEELPR (130 aa)) enclose the PX domain. A 1,2-diacyl-sn-glycero-3-phospho-(1D-myo-inositol-3-phosphate) contacts are provided by Arg-186, Ser-188, and Lys-214. Ser-188 carries the phosphoserine modification. The residue at position 237 (Lys-237) is an N6-acetyllysine. Arg-238 is an a 1,2-diacyl-sn-glycero-3-phospho-(1D-myo-inositol-3-phosphate) binding site. Ser-280 bears the Phosphoserine mark. The segment at 281-298 (GAGLLKMFNKATDAVSKM) is membrane-binding amphipathic helix. One can recognise a BAR domain in the interval 302 to 522 (MNESDIWFEE…AFLPEAKAIS (221 aa)).

This sequence belongs to the sorting nexin family. In terms of assembly, predominantly forms heterodimers with BAR domain-containing sorting nexins SNX5, SNX6 and SNX32; can self-associate to form homodimers. The heterodimers are proposed to self-assemble into helical arrays on the membrane to stabilize and expand local membrane curvature underlying endosomal tubule formation. Thought to be a component of the originally described retromer complex (also called SNX-BAR retromer) which is a pentamer containing the heterotrimeric retromer cargo-selective complex (CSC), also described as vacuolar protein sorting subcomplex (VPS) and a heterodimeric membrane-deforming subcomplex formed between SNX1 or SNX2 and SNX5 or SNX6 (also called SNX-BAR subcomplex); the respective CSC and SNX-BAR subcomplexes associate with low affinity. Interacts with SNX5, SNX6, SNX32, VPS26A, VPS29, VPS35, DRD5, DENND5A, KALRN, RHOG (GDP-bound form). The interaction with SNX2 is reported controversially. Interacts with DNAJC13; prevented by presence of HGS. Interacts with HGS.

Its subcellular location is the endosome membrane. The protein resides in the golgi apparatus. The protein localises to the trans-Golgi network membrane. It is found in the early endosome membrane. It localises to the cell projection. Its subcellular location is the lamellipodium. Functionally, involved in several stages of intracellular trafficking. Interacts with membranes containing phosphatidylinositol 3-phosphate (PtdIns(3P)) or phosphatidylinositol 3,5-bisphosphate (PtdIns(3,5)P2). Acts in part as component of the retromer membrane-deforming SNX-BAR subcomplex. The SNX-BAR retromer mediates retrograde transport of cargo proteins from endosomes to the trans-Golgi network (TGN) and is involved in endosome-to-plasma membrane transport for cargo protein recycling. The SNX-BAR subcomplex functions to deform the donor membrane into a tubular profile called endosome-to-TGN transport carrier (ETC). Can sense membrane curvature and has in vitro vesicle-to-membrane remodeling activity. Involved in retrograde endosome-to-TGN transport of lysosomal enzyme receptors (IGF2R, M6PR and SORT1). Plays a role in targeting ligand-activated EGFR to the lysosomes for degradation after endocytosis from the cell surface and release from the Golgi. Involvement in retromer-independent endocytic trafficking of P2RY1 and lysosomal degradation of protease-activated receptor-1/F2R. Promotes KALRN- and RHOG-dependent but retromer-independent membrane remodeling such as lamellipodium formation; the function is dependent on GEF activity of KALRN. Required for endocytosis of DRD5 upon agonist stimulation but not for basal receptor trafficking. The polypeptide is Sorting nexin-1 (SNX1) (Macaca fascicularis (Crab-eating macaque)).